A 377-amino-acid chain; its full sequence is Succinyl-diaminopimelate desuccinylase (377 aa).

H67 contributes to the Zn(2+) binding site. D69 is an active-site residue. D100 provides a ligand contact to Zn(2+). The active-site Proton acceptor is E134. Zn(2+) is bound by residues E135, E163, and H349.

Belongs to the peptidase M20A family. DapE subfamily. In terms of assembly, homodimer. It depends on Zn(2+) as a cofactor. Requires Co(2+) as cofactor.

It catalyses the reaction N-succinyl-(2S,6S)-2,6-diaminopimelate + H2O = (2S,6S)-2,6-diaminopimelate + succinate. Its pathway is amino-acid biosynthesis; L-lysine biosynthesis via DAP pathway; LL-2,6-diaminopimelate from (S)-tetrahydrodipicolinate (succinylase route): step 3/3. Catalyzes the hydrolysis of N-succinyl-L,L-diaminopimelic acid (SDAP), forming succinate and LL-2,6-diaminopimelate (DAP), an intermediate involved in the bacterial biosynthesis of lysine and meso-diaminopimelic acid, an essential component of bacterial cell walls. The polypeptide is Succinyl-diaminopimelate desuccinylase (Actinobacillus pleuropneumoniae serotype 5b (strain L20)).